The sequence spans 137 residues: Ribosome-binding factor A (137 aa).

The protein belongs to the RbfA family. In terms of assembly, monomer. Binds 30S ribosomal subunits, but not 50S ribosomal subunits or 70S ribosomes.

Its subcellular location is the cytoplasm. Its function is as follows. One of several proteins that assist in the late maturation steps of the functional core of the 30S ribosomal subunit. Associates with free 30S ribosomal subunits (but not with 30S subunits that are part of 70S ribosomes or polysomes). Required for efficient processing of 16S rRNA. May interact with the 5'-terminal helix region of 16S rRNA. This Trichodesmium erythraeum (strain IMS101) protein is Ribosome-binding factor A.